A 101-amino-acid chain; its full sequence is Eukaryotic translation initiation factor 4E-binding protein 3 (101 aa).

Residues 1–28 (MSSSTSCPIPGCRDQLPDGYSTTPGGTL) are disordered. The short motif at 40–46 (YDRKFLL) is the YXXXXLphi motif element. A TOS motif motif is present at residues 97–101 (FEMDM).

The protein belongs to the eIF4E-binding protein family. Interacts with EIF4E. Interacts with RPA2 (via N-terminus); the interaction enhances EIF4EBP3-mediated inhibition of EIF4E-mediated mRNA nuclear export. Post-translationally, phosphorylated.

The protein localises to the cytoplasm. It is found in the nucleus. In terms of biological role, repressor of translation initiation that regulates EIF4E activity by preventing its assembly into the eIF4F complex: the hypophosphorylated form competes with EIF4G1/EIF4G3 and strongly binds to EIF4E, leading to repression of translation. In contrast, the hyperphosphorylated form dissociates from EIF4E, allowing interaction between EIF4G1/EIF4G3 and EIF4E, leading to initiation of translation. Inhibits EIF4E-mediated mRNA nuclear export. The polypeptide is Eukaryotic translation initiation factor 4E-binding protein 3 (Eif4ebp3) (Mus musculus (Mouse)).